The sequence spans 175 residues: B9 domain-containing protein 2 (175 aa).

A C2 B9-type domain is found at 2 to 118; it reads AELHIIGQII…QCVTWRPLGS (117 aa).

Belongs to the B9D family. Part of the tectonic-like complex (also named B9 complex).

The protein resides in the cytoplasm. It localises to the cytoskeleton. It is found in the cilium basal body. Its subcellular location is the cilium axoneme. In terms of biological role, component of the tectonic-like complex, a complex localized at the transition zone of primary cilia and acting as a barrier that prevents diffusion of transmembrane proteins between the cilia and plasma membranes. The polypeptide is B9 domain-containing protein 2 (b9d2) (Danio rerio (Zebrafish)).